A 351-amino-acid polypeptide reads, in one-letter code: Fructose-1,6-bisphosphatase class 1 (351 aa).

E94, D113, L115, and D116 together coordinate Mg(2+). Substrate contacts are provided by residues 116-119 (DGSS) and N207. Residue E279 participates in Mg(2+) binding.

The protein belongs to the FBPase class 1 family. Homotetramer. Mg(2+) is required as a cofactor.

It localises to the cytoplasm. The enzyme catalyses beta-D-fructose 1,6-bisphosphate + H2O = beta-D-fructose 6-phosphate + phosphate. Its pathway is carbohydrate biosynthesis; gluconeogenesis. This Methylobacterium radiotolerans (strain ATCC 27329 / DSM 1819 / JCM 2831 / NBRC 15690 / NCIMB 10815 / 0-1) protein is Fructose-1,6-bisphosphatase class 1.